The chain runs to 156 residues: Small ribosomal subunit protein uS7 (156 aa).

Belongs to the universal ribosomal protein uS7 family. Part of the 30S ribosomal subunit. Contacts proteins S9 and S11.

Functionally, one of the primary rRNA binding proteins, it binds directly to 16S rRNA where it nucleates assembly of the head domain of the 30S subunit. Is located at the subunit interface close to the decoding center, probably blocks exit of the E-site tRNA. The protein is Small ribosomal subunit protein uS7 of Desulfitobacterium hafniense (strain DSM 10664 / DCB-2).